Here is a 280-residue protein sequence, read N- to C-terminus: Golgi to ER traffic protein 2 (280 aa).

Topologically, residues 1-149 (MPSDREKQRI…IAYNLYQQRK (149 aa)) are cytoplasmic. Residues 15–59 (RQAKMAKGGASDRLNKILSQGSSVKTSAVSVLDQPQPADHDPEGM) form a disordered region. The span at 31 to 43 (ILSQGSSVKTSAV) shows a compositional bias: polar residues. A helical transmembrane segment spans residues 150–170 (VRHRFLVVRMVSILANFVYHF). Topologically, residues 171-197 (LTISDFSFSPSANPFIRSIPPTSSVSS) are lumenal. Residues 198 to 217 (FFQIFVAIEAVLVAAYIAAS) traverse the membrane as a helical segment. The Cytoplasmic portion of the chain corresponds to 218–257 (RNVPSNNNGLLVKGISMAAMFVPKLQRFQPLIMKIIGCWD). A helical transmembrane segment spans residues 258–278 (TVTFVLNDLGLVVLLFGLISF). The Lumenal portion of the chain corresponds to 279–280 (RR).

Belongs to the GET2 family. In terms of assembly, component of the Golgi to ER traffic (GET) complex, which is composed of GET1, GET2 and GET3. Within the complex, GET1 and GET2 form a heterotetramer which is stabilized by phosphatidylinositol binding and which binds to the GET3 homodimer.

The protein resides in the endoplasmic reticulum membrane. It localises to the golgi apparatus membrane. Required for the post-translational delivery of tail-anchored (TA) proteins to the endoplasmic reticulum. Together with GET1, acts as a membrane receptor for soluble GET3, which recognizes and selectively binds the transmembrane domain of TA proteins in the cytosol. The GET complex cooperates with the HDEL receptor ERD2 to mediate the ATP-dependent retrieval of resident ER proteins that contain a C-terminal H-D-E-L retention signal from the Golgi to the ER. The polypeptide is Golgi to ER traffic protein 2 (Meyerozyma guilliermondii (strain ATCC 6260 / CBS 566 / DSM 6381 / JCM 1539 / NBRC 10279 / NRRL Y-324) (Yeast)).